The following is a 244-amino-acid chain: Transcriptional activator protein PhzR (244 aa).

Residues 177-242 enclose the HTH luxR-type domain; that stretch reads AFNTDVEFSE…QAVSYAVALG (66 aa). Residues 201–220 constitute a DNA-binding region (H-T-H motif); that stretch reads SEEIGVIMGVCTDTVNYHHR.

It belongs to the autoinducer-regulated transcriptional regulatory protein family.

Its function is as follows. Positive regulator of phenazine antibiotic production. May activate the phenazine biosynthetic genes by binding to a DNA sequence upstream of them, or to an intermediate gene which, in turn, interacts with them. The protein is Transcriptional activator protein PhzR (phzR) of Pseudomonas fluorescens.